Reading from the N-terminus, the 1246-residue chain is Stromal processing peptidase, chloroplastic (1246 aa).

A chloroplast-targeting transit peptide spans 1–136 (MASFPSPPLA…AKIRRRHVLH (136 aa)). Residue His228 participates in Zn(2+) binding. Residue Glu231 is the Proton acceptor of the active site. Zn(2+) is bound at residue His232. The active site involves Glu302. A Zn(2+)-binding site is contributed by Glu309.

It belongs to the peptidase M16 family. Requires Zn(2+) as cofactor. In terms of tissue distribution, widely expressed.

It is found in the plastid. It localises to the chloroplast stroma. Functionally, cleaves presequences (transit peptides) from chloroplastic protein precursors. Initially recognizes a precursor by binding to the C-terminus of its transit peptide and then removes the transit peptide in a single endoproteolytic step. In a next step, pursues the cleavage of transit peptide to a subfragment form. This is Stromal processing peptidase, chloroplastic from Oryza sativa subsp. indica (Rice).